Reading from the N-terminus, the 261-residue chain is tRNA pseudouridine synthase A (261 aa).

Aspartate 51 (nucleophile) is an active-site residue. Position 109 (tyrosine 109) interacts with substrate.

The protein belongs to the tRNA pseudouridine synthase TruA family. As to quaternary structure, homodimer.

The enzyme catalyses uridine(38/39/40) in tRNA = pseudouridine(38/39/40) in tRNA. Functionally, formation of pseudouridine at positions 38, 39 and 40 in the anticodon stem and loop of transfer RNAs. This Shewanella sp. (strain MR-4) protein is tRNA pseudouridine synthase A.